A 498-amino-acid chain; its full sequence is NAD(P)H-quinone oxidoreductase chain 4, chloroplastic (498 aa).

The next 14 membrane-spanning stretches (helical) occupy residues 4–24, 37–57, 80–100, 112–129, 134–154, 167–187, 208–228, 242–262, 272–292, 305–325, 330–350, 386–406, 416–436, and 463–483; these read FPWL…IVLF, YCIC…HFEL, FGID…TTLA, KLFY…LGTF, ILLF…LLSM, FILY…GMSL, ALEI…SPII, HYST…YGLV, AHSI…IYAA, IAYS…SISE, GAIL…FLAG, LALP…GIIT, ILIT…SLSI, and FISI…DFIF.

It belongs to the complex I subunit 4 family.

The protein localises to the plastid. Its subcellular location is the chloroplast thylakoid membrane. It catalyses the reaction a plastoquinone + NADH + (n+1) H(+)(in) = a plastoquinol + NAD(+) + n H(+)(out). It carries out the reaction a plastoquinone + NADPH + (n+1) H(+)(in) = a plastoquinol + NADP(+) + n H(+)(out). In Phaseolus vulgaris (Kidney bean), this protein is NAD(P)H-quinone oxidoreductase chain 4, chloroplastic.